Consider the following 91-residue polypeptide: Large ribosomal subunit protein eL34 (91 aa).

A disordered region spans residues 48–69; that stretch reads RGRPVEMRKLPKTKKRPERPMP.

This sequence belongs to the eukaryotic ribosomal protein eL34 family.

This is Large ribosomal subunit protein eL34 (rpl34e) from Pyrococcus horikoshii (strain ATCC 700860 / DSM 12428 / JCM 9974 / NBRC 100139 / OT-3).